The chain runs to 350 residues: Transmembrane protein 185A (350 aa).

The next 7 helical transmembrane spans lie at 16–36 (LIYA…DGII), 41–61 (WAVF…ASVG), 81–101 (FKAM…EVLV), 111–131 (FWLL…AACV), 177–197 (ILMS…VLFL), 211–231 (ITMA…EILL), and 240–260 (AFSC…LMAT). The mediates interaction with MAP1B stretch occupies residues 298-350 (DLHHEDNEETEETPVPEPPKIAPMFRKKARVVITQSPGKYVLPPPKLNIEMPD).

The protein belongs to the TMEM185 family. In terms of assembly, interacts with MAP1B.

The protein resides in the cell projection. It localises to the dendrite. The protein localises to the membrane. The polypeptide is Transmembrane protein 185A (TMEM185A) (Homo sapiens (Human)).